A 266-amino-acid chain; its full sequence is Putative carbamate hydrolase RutD (266 aa).

This sequence belongs to the AB hydrolase superfamily. Hydrolase RutD family.

It carries out the reaction carbamate + 2 H(+) = NH4(+) + CO2. Functionally, involved in pyrimidine catabolism. May facilitate the hydrolysis of carbamate, a reaction that can also occur spontaneously. The chain is Putative carbamate hydrolase RutD from Escherichia coli O26:H11 (strain 11368 / EHEC).